The sequence spans 309 residues: uncharacterized protein (309 aa).

Solcar repeat units lie at residues 6 to 83, 97 to 211, and 216 to 302; these read SDLY…LCHS, LTGY…FKRL, and NDKA…VSLL. The next 6 membrane-spanning stretches (helical) occupy residues 12–32, 47–67, 100–120, 184–204, 222–242, and 285–305; these read ITAG…FEYL, IILP…VAAF, YNLL…IIPF, VQGT…QFTA, VITG…IDVV, and VGIS…LLGF.

The protein belongs to the mitochondrial carrier (TC 2.A.29) family.

The protein resides in the mitochondrion inner membrane. This is an uncharacterized protein from Saccharomyces cerevisiae (strain ATCC 204508 / S288c) (Baker's yeast).